The chain runs to 362 residues: Ferrochelatase (362 aa).

Fe cation-binding residues include histidine 212 and glutamate 294.

This sequence belongs to the ferrochelatase family.

The protein localises to the cytoplasm. It catalyses the reaction heme b + 2 H(+) = protoporphyrin IX + Fe(2+). It participates in porphyrin-containing compound metabolism; protoheme biosynthesis; protoheme from protoporphyrin-IX: step 1/1. Its function is as follows. Catalyzes the ferrous insertion into protoporphyrin IX. In Leptospira biflexa, this protein is Ferrochelatase.